A 104-amino-acid polypeptide reads, in one-letter code: Large ribosomal subunit protein eL30 (104 aa).

The protein belongs to the eukaryotic ribosomal protein eL30 family.

The chain is Large ribosomal subunit protein eL30 (RPL30) from Leishmania major.